The following is an 816-amino-acid chain: Fibroblast growth factor receptor 1 (816 aa).

A signal peptide spans 1-23 (MLSWRHLVFWAMLVMATLSAARP). At 24–374 (APTLPEQVSP…VIMTSPLYLE (351 aa)) the chain is on the extracellular side. Residues 25 to 118 (PTLPEQVSPK…ETTFFAVNVS (94 aa)) enclose the Ig-like C2-type 1 domain. Cys-54 and Cys-100 are disulfide-bonded. Residues Asn-76 and Asn-116 are each glycosylated (N-linked (GlcNAc...) asparagine). The disordered stretch occupies residues 118–152 (SDRIPSVEDDDDDDEKSSSEEKEAENSKPNPVAPF). Basic and acidic residues predominate over residues 133 to 143 (KSSSEEKEAEN). Ig-like C2-type domains follow at residues 156–244 (PEKM…YQLD) and 253–355 (PILQ…AWLT). An intrachain disulfide couples Cys-176 to Cys-228. 5 N-linked (GlcNAc...) asparagine glycosylation sites follow: Asn-238, Asn-262, Asn-294, Asn-315, and Asn-328. An intrachain disulfide couples Cys-275 to Cys-339. Residues 375–395 (IIIYCTGAFLISCMLVTVIIY) traverse the membrane as a helical segment. The Cytoplasmic portion of the chain corresponds to 396-816 (KMKNTTKKTD…QHANGGLKKR (421 aa)). Tyr-459 carries the phosphotyrosine; by autocatalysis modification. The Protein kinase domain maps to 474–763 (LILGKPLGEG…VAMTSNQEYL (290 aa)). Residues 480-486 (LGEGCFG), Lys-510, 558-560 (EYA), and Asn-564 each bind ATP. Phosphotyrosine; by autocatalysis is present on residues Tyr-579 and Tyr-581. The Proton acceptor role is filled by Asp-619. ATP contacts are provided by Arg-623 and Asp-637. A phosphotyrosine; by autocatalysis mark is found at Tyr-649, Tyr-650, Tyr-726, and Tyr-762. The segment at 776-816 (FPDTRSSTCSSGEDSVFSHDPLPDEPCLPKYQHANGGLKKR) is disordered. Over residues 779-788 (TRSSTCSSGE) the composition is skewed to polar residues.

The protein belongs to the protein kinase superfamily. Tyr protein kinase family. Fibroblast growth factor receptor subfamily. In terms of assembly, monomer. Homodimer after ligand binding. Post-translationally, autophosphorylated. Binding of FGF family members together with heparan sulfate proteoglycan or heparin promotes receptor dimerization and autophosphorylation on tyrosine residues. Autophosphorylation occurs in trans between the two FGFR molecules present in the dimer and proceeds in a highly ordered manner. Phosphotyrosine residues provide docking sites for interacting proteins and so are crucial for FGFR1 function and its regulation. Ubiquitinated. FGFR1 is rapidly ubiquitinated after autophosphorylation, leading to internalization and degradation. In terms of processing, N-glycosylated in the endoplasmic reticulum. The N-glycan chains undergo further maturation to an Endo H-resistant form in the Golgi apparatus.

Its subcellular location is the cell membrane. It is found in the nucleus. The protein localises to the cytoplasm. The protein resides in the cytosol. It localises to the cytoplasmic vesicle. It carries out the reaction L-tyrosyl-[protein] + ATP = O-phospho-L-tyrosyl-[protein] + ADP + H(+). Its activity is regulated as follows. Present in an inactive conformation in the absence of bound ligand. Ligand binding leads to dimerization and activation by sequential autophosphorylation on tyrosine residues. Its function is as follows. Tyrosine-protein kinase that acts as a cell-surface receptor for fibroblast growth factors and plays an essential role in the regulation of embryonic development, cell proliferation, differentiation and migration. Required for normal mesoderm patterning and normal skeletogenesis. Phosphorylates PLCG1, FRS2, GAB1 and SHB. Ligand binding leads to the activation of several signaling cascades. Activation of PLCG1 leads to the production of the cellular signaling molecules diacylglycerol and inositol-1,4,5-trisphosphate. Phosphorylation of FRS2 triggers recruitment of GRB2, GAB1, PIK3R1 and SOS1, and mediates activation of RAS, MAPK1/ERK2, MAPK3/ERK1 and the MAP kinase signaling pathway, as well as of the AKT1 signaling pathway. Promotes phosphorylation of SHC1, STAT1 and PTPN11/SHP2. In the nucleus, enhances RPS6KA1 and CREB1 activity and contributes to the regulation of transcription. FGFR1 signaling is down-regulated by ubiquitination, internalization and degradation. This is Fibroblast growth factor receptor 1 (FGFR1) from Pleurodeles waltl (Iberian ribbed newt).